A 539-amino-acid polypeptide reads, in one-letter code: Glucose-6-phosphate isomerase (539 aa).

Residue E353 is the Proton donor of the active site. Active-site residues include H384 and K505.

Belongs to the GPI family.

It is found in the cytoplasm. It catalyses the reaction alpha-D-glucose 6-phosphate = beta-D-fructose 6-phosphate. Its pathway is carbohydrate biosynthesis; gluconeogenesis. It participates in carbohydrate degradation; glycolysis; D-glyceraldehyde 3-phosphate and glycerone phosphate from D-glucose: step 2/4. Catalyzes the reversible isomerization of glucose-6-phosphate to fructose-6-phosphate. The protein is Glucose-6-phosphate isomerase of Ralstonia pickettii (strain 12J).